We begin with the raw amino-acid sequence, 963 residues long: Reversion-inducing cysteine-rich protein with Kazal motifs (963 aa).

An N-terminal signal peptide occupies residues 1 to 28; that stretch reads MAAAVAAWPWALFCLAAVPPLLSPGAAG. One copy of the Knot 1 repeat lies at 31–78; it reads CCYHAKDNLMCRDVCEQILSSKSDSRLKHLLQRAPEYCPESMGEVWGC. Residues 31–332 are 5 X Knot repeats; it reads CCYHAKDNLM…NAVEVSMLTC (302 aa). A glycan (N-linked (GlcNAc...) asparagine) is linked at Asn80. 2 Knot repeats span residues 98–135 and 145–191; these read CCEL…LFSC and CCSY…LIHC. The N-linked (GlcNAc...) asparagine glycan is linked to Asn194. Knot repeat units lie at residues 210–257 and 286–332; these read CCDR…LWQC and CCSK…MLTC. 2 N-linked (GlcNAc...) asparagine glycosylation sites follow: Asn291 and Asn346. 3 consecutive Kazal-like domains span residues 621-667, 692-746, and 749-783; these read KFTG…SCIS, SFGK…PCQP, and KSVE…HCQA. 6 disulfide bridges follow: Cys627-Cys652, Cys629-Cys648, Cys637-Cys665, Cys710-Cys729, Cys718-Cys744, and Cys755-Cys781. Ser936 is lipidated: GPI-anchor amidated serine. Positions 937–963 are excised as a propeptide; sequence PSVKVGPVLHCLFISFSFTLLKLMDYI.

The protein belongs to the RECK family. As to quaternary structure, interacts (via knot repeats) with WNT7A (via disordered linker region); the interaction is direct. Interacts (via knot repeats) with WNT7B (via disordered linker region); the interaction is direct. Interacts with ADGRA2; the interaction is direct. In terms of processing, localizes to the plasma membrane via its GPI-anchor. Released from the plasma membrane following cleavage of the GPI-anchor by GDPD5/GPE2.

It is found in the cell membrane. Its function is as follows. Functions together with ADGRA2 to enable brain endothelial cells to selectively respond to Wnt7 signals (WNT7A or WNT7B). Plays a key role in Wnt7-specific responses: required for central nervous system (CNS) angiogenesis and blood-brain barrier regulation. Acts as a Wnt7-specific coactivator of canonical Wnt signaling by decoding Wnt ligands: acts by interacting specifically with the disordered linker region of Wnt7, thereby conferring ligand selectivity for Wnt7. ADGRA2 is then required to deliver RECK-bound Wnt7 to frizzled by assembling a higher-order RECK-ADGRA2-Fzd-LRP5-LRP6 complex. Also acts as a serine protease inhibitor. This is Reversion-inducing cysteine-rich protein with Kazal motifs from Gallus gallus (Chicken).